The following is a 225-amino-acid chain: Large ribosomal subunit protein uL1 (225 aa).

It belongs to the universal ribosomal protein uL1 family. Part of the 50S ribosomal subunit.

Functionally, binds directly to 23S rRNA. Probably involved in E site tRNA release. In terms of biological role, protein L1 is also a translational repressor protein, it controls the translation of its operon by binding to its mRNA. The polypeptide is Large ribosomal subunit protein uL1 (Thermofilum pendens (strain DSM 2475 / Hrk 5)).